Consider the following 419-residue polypeptide: 2-amino-3-ketobutyrate coenzyme A ligase, mitochondrial (419 aa).

Residues 1 to 21 (MWAGRVLHAALSRAPRESRAQ) constitute a mitochondrion transit peptide. Lys45 is subject to N6-acetyllysine; alternate. The residue at position 45 (Lys45) is an N6-succinyllysine; alternate. A pyridoxal 5'-phosphate-binding site is contributed by 134-135 (CF). His159 is a substrate binding site. Lys187 carries the N6-acetyllysine; alternate modification. Lys187 carries the post-translational modification N6-succinyllysine; alternate. Residues Ser206, 231 to 234 (DESH), 262 to 265 (TLGK), and 295 to 296 (SN) contribute to the pyridoxal 5'-phosphate site. Residue Lys265 is modified to N6-(pyridoxal phosphate)lysine. Lys326 and Lys368 each carry N6-succinyllysine. An N6-acetyllysine; alternate modification is found at Lys383. Lys383 is modified (N6-succinyllysine; alternate). Arg389 is a binding site for substrate.

Belongs to the class-II pyridoxal-phosphate-dependent aminotransferase family. The cofactor is pyridoxal 5'-phosphate.

It is found in the mitochondrion. It localises to the nucleus. It catalyses the reaction glycine + acetyl-CoA = (2S)-2-amino-3-oxobutanoate + CoA. Its pathway is amino-acid degradation; L-threonine degradation via oxydo-reductase pathway; glycine from L-threonine: step 2/2. Its function is as follows. Pyridoxal phosphate (PLP) dependent enzyme, which catalyzes the cleavage of 2-amino-3-oxobutanoate to glycine and acetyl-CoA. Catalyzes the second reaction step on the main metabolic degradation pathway for L-threonine. This is 2-amino-3-ketobutyrate coenzyme A ligase, mitochondrial (GCAT) from Bos taurus (Bovine).